The primary structure comprises 568 residues: Protein downstream neighbor of son homolog (568 aa).

Disordered stretches follow at residues 28 to 48 and 311 to 355; these read NKLA…QVDE and MPLK…DDDE. Over residues 315-335 the composition is skewed to polar residues; it reads SDNSGNAHDNSFNEESTTTSL.

Belongs to the DONSON family. Expression peaks during late G1 and S phase (at protein level).

The protein localises to the nucleus. Functionally, essential for DNA amplification in the ovary and required for cell proliferation during development. This chain is Protein downstream neighbor of son homolog (hd), found in Drosophila melanogaster (Fruit fly).